Consider the following 81-residue polypeptide: Delta-actitoxin-Aeq2d (81 aa).

Residues 1-19 form the signal peptide; that stretch reads MNRLMILVFAAVILALASA. Positions 20 to 25 are excised as a propeptide; that stretch reads DDVDIA. Cystine bridges form between Cys31-Cys78, Cys33-Cys68, and Cys61-Cys79.

This sequence belongs to the sea anemone sodium channel inhibitory toxin family. Type I subfamily.

It is found in the secreted. Its subcellular location is the nematocyst. Its function is as follows. Binds specifically to voltage-gated sodium channels (Nav), thereby delaying their inactivation during signal transduction. Causes death to crabs. This chain is Delta-actitoxin-Aeq2d, found in Actinia equina (Beadlet anemone).